Consider the following 426-residue polypeptide: Gamma-glutamyl phosphate reductase (426 aa).

The protein belongs to the gamma-glutamyl phosphate reductase family.

It localises to the cytoplasm. It catalyses the reaction L-glutamate 5-semialdehyde + phosphate + NADP(+) = L-glutamyl 5-phosphate + NADPH + H(+). The protein operates within amino-acid biosynthesis; L-proline biosynthesis; L-glutamate 5-semialdehyde from L-glutamate: step 2/2. Functionally, catalyzes the NADPH-dependent reduction of L-glutamate 5-phosphate into L-glutamate 5-semialdehyde and phosphate. The product spontaneously undergoes cyclization to form 1-pyrroline-5-carboxylate. This is Gamma-glutamyl phosphate reductase from Deinococcus geothermalis (strain DSM 11300 / CIP 105573 / AG-3a).